Reading from the N-terminus, the 712-residue chain is Osmolarity two-component system protein SSK1 (712 aa).

The interval 73 to 114 (ADNTSSNNTNDNSCRSKSNGAGSGANLSVNSNTKSSVSPTAG) is disordered. Low complexity predominate over residues 74 to 85 (DNTSSNNTNDNS). A compositionally biased stretch (polar residues) spans 87–113 (RSKSNGAGSGANLSVNSNTKSSVSPTA). Phosphoserine is present on residues Ser110, Ser195, Ser327, Ser351, Ser368, and Ser380. Positions 340 to 362 (KADLKGKDGNSSPQEFKLITDEE) are disordered. Residues 448–468 (EVQRRKEDVTPASPILTSSQT) form a disordered region. One can recognise a Response regulatory domain in the interval 505–647 (NVLIVEDNVI…WLSKKITEWG (143 aa)). The residue at position 554 (Asp554) is a 4-aspartylphosphate. The disordered stretch occupies residues 672 to 712 (KSPQKPIAPSNPHSFKQATSMTPTHSPVRKNSNLSPTQIEL). A Phosphoserine modification is found at Ser673. The span at 682–712 (NPHSFKQATSMTPTHSPVRKNSNLSPTQIEL) shows a compositional bias: polar residues. Position 693 is a phosphothreonine (Thr693). Phosphoserine occurs at positions 703 and 706.

It belongs to the SSK1 family. Interacts with SSK2, SSK22 and YPD1. Post-translationally, the phosphorelay mechanism involves the sequential transfer of a phosphate group from 'His-576' (H1) to 'Asp-1144' (D1) of SLN1, then to 'His-64' (H2) of YPD1 and finally to Asp-554 (D2) of SSK1.

Its subcellular location is the cytoplasm. Final receptor of the SLN1-YPD1-SSK1 two-component regulatory system, which controls activity of the HOG1 pathway in response to changes in the osmolarity of the extracellular environment. Under normal osmotic conditions, maintained in a phosphorylated and inactive state by the phosphorelay intermediate protein YPD1. Under conditions of high osmolarity, the histidine kinase SLN1 is no longer active and the unphosphorylated form of SSK1 interacts with and activates SSK2 and SSK22, two MAPKKKs that further stimulate the PBS2-HOG1 MAPKK-MAPK cascade. Unphosphorylated SSK1 is subsequently degraded by the UBC7-dependent ubiquitin-proteasome system to down-regulate the HOG1 pathway after completion of the osmotic adaptation. This Saccharomyces cerevisiae (strain ATCC 204508 / S288c) (Baker's yeast) protein is Osmolarity two-component system protein SSK1.